The primary structure comprises 671 residues: DNA ligase (671 aa).

NAD(+)-binding positions include 32–36, 81–82, and glutamate 113; these read DAEYD and SL. The N6-AMP-lysine intermediate role is filled by lysine 115. Residues arginine 136, glutamate 173, lysine 290, and lysine 314 each contribute to the NAD(+) site. Zn(2+)-binding residues include cysteine 408, cysteine 411, cysteine 426, and cysteine 432. The BRCT domain occupies 593-671; it reads EIDSPFAGKT…EAEMLRLLGS (79 aa).

It belongs to the NAD-dependent DNA ligase family. LigA subfamily. The cofactor is Mg(2+). Mn(2+) is required as a cofactor.

The enzyme catalyses NAD(+) + (deoxyribonucleotide)n-3'-hydroxyl + 5'-phospho-(deoxyribonucleotide)m = (deoxyribonucleotide)n+m + AMP + beta-nicotinamide D-nucleotide.. In terms of biological role, DNA ligase that catalyzes the formation of phosphodiester linkages between 5'-phosphoryl and 3'-hydroxyl groups in double-stranded DNA using NAD as a coenzyme and as the energy source for the reaction. It is essential for DNA replication and repair of damaged DNA. The protein is DNA ligase of Shigella sonnei (strain Ss046).